The chain runs to 239 residues: NADH-quinone oxidoreductase chain 2 (239 aa).

Residues Cys96, Cys101, Cys137, and Cys141 each contribute to the [2Fe-2S] cluster site.

This sequence belongs to the complex I 24 kDa subunit family. NDH-1 is composed of at least 14 different subunits, Nqo1 to Nqo14. The complex has a L-shaped structure, with the hydrophobic arm (subunits Nqo7, Nqo8, Nqo10 to Nqo14) embedded in the inner membrane and the hydrophilic peripheral arm (subunits Nqo1 to Nqo6, Nqo9) protruding into the bacterial cytoplasm. The hydrophilic domain contains all the redox centers. Requires [2Fe-2S] cluster as cofactor.

The protein localises to the cell inner membrane. The catalysed reaction is a quinone + NADH + 5 H(+)(in) = a quinol + NAD(+) + 4 H(+)(out). Functionally, NDH-1 shuttles electrons from NADH, via FMN and iron-sulfur (Fe-S) centers, to quinones in the respiratory chain. The immediate electron acceptor for the enzyme in this species is believed to be ubiquinone. Couples the redox reaction to proton translocation (for every two electrons transferred, four hydrogen ions are translocated across the cytoplasmic membrane), and thus conserves the redox energy in a proton gradient. The polypeptide is NADH-quinone oxidoreductase chain 2 (nqo2) (Paracoccus denitrificans).